The chain runs to 162 residues: MRIGHGFDVHKFGENGSGPLIIGGVRIPYEKGLLAHSDGDVALHAATDALLGAAALGDIGKLFPDTDPAFKGADSRALLREAYRRILAKGYRLGNLDITIIAQAPKMAPHIPQMRVHLAEDLQCHMDDINVKATTTEQLGFTGRGEGIACEAVALLIKVEQA.

Positions 8 and 10 each coordinate a divalent metal cation. 4-CDP-2-C-methyl-D-erythritol 2-phosphate-binding positions include 8 to 10 (DVH) and 36 to 37 (HS). A divalent metal cation is bound at residue histidine 44. 4-CDP-2-C-methyl-D-erythritol 2-phosphate-binding positions include 58-60 (DIG), 63-67 (FPDTD), 102-108 (AQAPKMA), 134-137 (TTTE), phenylalanine 141, and arginine 144.

The protein belongs to the IspF family. In terms of assembly, homotrimer. It depends on a divalent metal cation as a cofactor.

The enzyme catalyses 4-CDP-2-C-methyl-D-erythritol 2-phosphate = 2-C-methyl-D-erythritol 2,4-cyclic diphosphate + CMP. It functions in the pathway isoprenoid biosynthesis; isopentenyl diphosphate biosynthesis via DXP pathway; isopentenyl diphosphate from 1-deoxy-D-xylulose 5-phosphate: step 4/6. Functionally, involved in the biosynthesis of isopentenyl diphosphate (IPP) and dimethylallyl diphosphate (DMAPP), two major building blocks of isoprenoid compounds. Catalyzes the conversion of 4-diphosphocytidyl-2-C-methyl-D-erythritol 2-phosphate (CDP-ME2P) to 2-C-methyl-D-erythritol 2,4-cyclodiphosphate (ME-CPP) with a corresponding release of cytidine 5-monophosphate (CMP). In Yersinia enterocolitica serotype O:8 / biotype 1B (strain NCTC 13174 / 8081), this protein is 2-C-methyl-D-erythritol 2,4-cyclodiphosphate synthase.